A 343-amino-acid polypeptide reads, in one-letter code: Shematrin-like protein 3 (343 aa).

The first 16 residues, 1-16 (MLKLVCAVVLIATVNA), serve as a signal peptide directing secretion.

Prismatic layer of shell (at protein level).

It localises to the secreted. The sequence is that of Shematrin-like protein 3 from Pinctada maxima (Silver-lipped pearl oyster).